The primary structure comprises 379 residues: uncharacterized protein (379 aa).

3 disordered regions span residues 1-37, 130-150, and 332-379; these read MSSIQGKGTAGPSPEGIPNSREDGEMNPEGVTISGQT, VRYSSGRHGMDRNKSSSLSPE, and NPPI…RGSR.

This sequence belongs to the chlamydial CPn_0499/CT_392/TC_0671 family.

This is an uncharacterized protein from Chlamydia muridarum (strain MoPn / Nigg).